A 64-amino-acid chain; its full sequence is MLDFAAIIETGQQIIQQISFNLQHISSVLSTELFDPFEVCVYRGGNYWELESADDCSGDDEFIE.

The polypeptide is Non-structural protein 3b (Gallus gallus (Chicken)).